A 233-amino-acid polypeptide reads, in one-letter code: Orotidine 5'-phosphate decarboxylase (233 aa).

Substrate is bound by residues D9, K31, 58–67, T120, R182, Q191, G211, and R212; that span reads DLKLHDIPNT. Catalysis depends on K60, which acts as the Proton donor.

The protein belongs to the OMP decarboxylase family. Type 1 subfamily. As to quaternary structure, homodimer.

The enzyme catalyses orotidine 5'-phosphate + H(+) = UMP + CO2. Its pathway is pyrimidine metabolism; UMP biosynthesis via de novo pathway; UMP from orotate: step 2/2. Catalyzes the decarboxylation of orotidine 5'-monophosphate (OMP) to uridine 5'-monophosphate (UMP). This is Orotidine 5'-phosphate decarboxylase from Listeria welshimeri serovar 6b (strain ATCC 35897 / DSM 20650 / CCUG 15529 / CIP 8149 / NCTC 11857 / SLCC 5334 / V8).